The primary structure comprises 134 residues: Fluoride-specific ion channel FluC (134 aa).

A run of 4 helical transmembrane segments spans residues 7–27 (LAVA…TIMA), 38–58 (GTLL…IVLV), 69–89 (LFLF…AAES), and 110–130 (VGSL…LLGH). Na(+)-binding residues include glycine 77 and threonine 80.

Belongs to the fluoride channel Fluc/FEX (TC 1.A.43) family.

Its subcellular location is the cell inner membrane. The enzyme catalyses fluoride(in) = fluoride(out). With respect to regulation, na(+) is not transported, but it plays an essential structural role and its presence is essential for fluoride channel function. In terms of biological role, fluoride-specific ion channel. Important for reducing fluoride concentration in the cell, thus reducing its toxicity. The protein is Fluoride-specific ion channel FluC of Legionella pneumophila (strain Paris).